The chain runs to 164 residues: Ecotin (164 aa).

The signal sequence occupies residues 1–20 (MKMFVPAVVFAALASASAWA). The cysteines at positions 72 and 109 are disulfide-linked.

The protein belongs to the protease inhibitor I11 (ecotin) family. In terms of assembly, homodimer.

It localises to the periplasm. In terms of biological role, general inhibitor of pancreatic serine proteases: inhibits chymotrypsin, trypsin, elastases, factor X, kallikrein as well as a variety of other proteases. In Salmonella paratyphi A (strain ATCC 9150 / SARB42), this protein is Ecotin.